The primary structure comprises 87 residues: Cell division topological specificity factor (87 aa).

It belongs to the MinE family.

Functionally, prevents the cell division inhibition by proteins MinC and MinD at internal division sites while permitting inhibition at polar sites. This ensures cell division at the proper site by restricting the formation of a division septum at the midpoint of the long axis of the cell. This chain is Cell division topological specificity factor, found in Acidiphilium cryptum (strain JF-5).